The primary structure comprises 95 residues: uncharacterized protein (95 aa).

This is an uncharacterized protein from Sulfolobus islandicus rod-shaped virus 1 (SIRV-1).